The following is a 481-amino-acid chain: Glycogen synthase (481 aa).

Lys-16 provides a ligand contact to ADP-alpha-D-glucose.

The protein belongs to the glycosyltransferase 1 family. Bacterial/plant glycogen synthase subfamily.

It catalyses the reaction [(1-&gt;4)-alpha-D-glucosyl](n) + ADP-alpha-D-glucose = [(1-&gt;4)-alpha-D-glucosyl](n+1) + ADP + H(+). The protein operates within glycan biosynthesis; glycogen biosynthesis. Functionally, synthesizes alpha-1,4-glucan chains using ADP-glucose. The chain is Glycogen synthase from Cellvibrio japonicus (strain Ueda107) (Pseudomonas fluorescens subsp. cellulosa).